The sequence spans 239 residues: tRNA (guanine-N(7)-)-methyltransferase (239 aa).

S-adenosyl-L-methionine contacts are provided by Glu69, Glu94, Asp121, and Asp144. Residue Asp144 is part of the active site. Lys148 serves as a coordination point for substrate. The segment at Arg150–Arg155 is interaction with RNA. Residues Asp180 and Thr217–Glu220 each bind substrate.

This sequence belongs to the class I-like SAM-binding methyltransferase superfamily. TrmB family. In terms of assembly, monomer.

The catalysed reaction is guanosine(46) in tRNA + S-adenosyl-L-methionine = N(7)-methylguanosine(46) in tRNA + S-adenosyl-L-homocysteine. It functions in the pathway tRNA modification; N(7)-methylguanine-tRNA biosynthesis. Its function is as follows. Catalyzes the formation of N(7)-methylguanine at position 46 (m7G46) in tRNA. This is tRNA (guanine-N(7)-)-methyltransferase from Klebsiella pneumoniae subsp. pneumoniae (strain ATCC 700721 / MGH 78578).